The following is a 130-amino-acid chain: Fluoride-specific ion channel FluC (130 aa).

4 helical membrane passes run 3–23, 39–59, 67–87, and 102–122; these read FVFL…YFVG, GTFS…HLAV, FGIF…SYGL, and ISYV…GWFL. The Na(+) site is built by G77 and T80.

Belongs to the fluoride channel Fluc/FEX (TC 1.A.43) family.

Its subcellular location is the cell inner membrane. It catalyses the reaction fluoride(in) = fluoride(out). Its activity is regulated as follows. Na(+) is not transported, but it plays an essential structural role and its presence is essential for fluoride channel function. Functionally, fluoride-specific ion channel. Important for reducing fluoride concentration in the cell, thus reducing its toxicity. The polypeptide is Fluoride-specific ion channel FluC (Helicobacter pylori (strain P12)).